Here is a 378-residue protein sequence, read N- to C-terminus: 23S rRNA (uracil(747)-C(5))-methyltransferase RlmC (378 aa).

Cys3, Cys11, Cys14, and Cys87 together coordinate [4Fe-4S] cluster. 4 residues coordinate S-adenosyl-L-methionine: Gln212, Phe241, Glu262, and Asn309. Catalysis depends on Cys336, which acts as the Nucleophile.

It belongs to the class I-like SAM-binding methyltransferase superfamily. RNA M5U methyltransferase family. RlmC subfamily.

It carries out the reaction uridine(747) in 23S rRNA + S-adenosyl-L-methionine = 5-methyluridine(747) in 23S rRNA + S-adenosyl-L-homocysteine + H(+). Functionally, catalyzes the formation of 5-methyl-uridine at position 747 (m5U747) in 23S rRNA. This chain is 23S rRNA (uracil(747)-C(5))-methyltransferase RlmC, found in Shewanella halifaxensis (strain HAW-EB4).